Consider the following 740-residue polypeptide: Ion-translocating oxidoreductase complex subunit C (740 aa).

2 4Fe-4S ferredoxin-type domains span residues 369 to 397 (GEPQ…QQLY) and 407 to 436 (KATT…VQYF). Positions 377, 380, 383, 387, 416, 419, 422, and 426 each coordinate [4Fe-4S] cluster. Residues 602 to 718 (KLEQQQANAE…EEQVDPRKAA (117 aa)) are disordered.

The protein belongs to the 4Fe4S bacterial-type ferredoxin family. RnfC subfamily. The complex is composed of six subunits: RsxA, RsxB, RsxC, RsxD, RsxE and RsxG. The cofactor is [4Fe-4S] cluster.

It is found in the cell inner membrane. Its function is as follows. Part of a membrane-bound complex that couples electron transfer with translocation of ions across the membrane. Required to maintain the reduced state of SoxR. The protein is Ion-translocating oxidoreductase complex subunit C of Shigella sonnei (strain Ss046).